A 1105-amino-acid polypeptide reads, in one-letter code: MEEEESLEGIISIDESLITSRLSQILDDVLDDRSSSHSVEKLKDVAVKYLQFCQFQPTLLDKLLSKYVPNLASYLLKVKNIGKCNSITVILYQFCKIRGYKAVRVLFPVGVQYIKELYTLLNESSNNTWHFHYIVLLWLSQALNTPFPLNSLDDSLDVKKTIYTIAIKYLENSGIDKEASCLVLSRLFSRDDGLDLLLGFLHHCESSWFKRSIFYKIGCLFSLSSFLKICPRNDCLQTVDVAFQFLNVAREDLVGQENSALRKLLCKCYTRLGIVLLPVNSSPNWKYSISNPDSFFQLPDDSNEEVHIYLEVIVDFLLSSVSDIDSFVRWSAAKGLAKIISRLPWNLAEQVIDAIIELMTENMFLNPIENTVNISITSPLVWHGAILFFAKLAGAGLIKYSKCLHILPLIEVGLSYEVRYGTRVTGQSIRDASCYFVWSFYHCYSKSAIEGLQTNLILCLLQTVLFDNEINVRRAATAALFEVIGRHASIPDGLSLISHINYVSVTDISNCYGDLCMKVAHFPQFRSCVFQRLFTNLQHWDVKVQQLSAFSLRQLSIKYPKELSIYLPPILDYLSVGNADFIFGYTIGLASIIGGFLSISFPFDINRIHDLLSHKNLLSLKKFSRQQQTKIILGILKGIQQIFANDIRVDRAFFSEAFSVIIAAIDLQEETIIKDISDAYSVLVKFDDMEETLEVLLDYIRKCSTSKEARIVYIILQNLPNISFRYQKKICKLLLDIYPQLHSIDYQAPVANALQNIIPFTYEKTESIEEFVKELLQVCSNYLTDTRGDVGSWIRKPAMKAISSLLVKDSSGKKLSEDIVWCCISYIIRQTFDKIDSLRGLAYQALEQIRVHYLIRRCEALTNIINRIRNNPNMDGEVLNELNISLLEIPNLRLQAFYGITVFTADGFGSDLAVKCFEFYLSYVYQLEDSFKKSNSRYGKRDLLQLYIDILSSEDEIARFYFPIMKSFTSLLAYGCFTDFQNVKGMSKAIFIVQRRALTCKSPGGLSAILELYRTLFLSKNELLRHHALKYTANLLLNPIEKVRYQAADTLLYAKSIGLLTFLPNELNQKLLTLDWFVPVSQNATFVKQLRNIIQKQIDKLIADR.

Asn122 and Asn126 each carry an N-linked (GlcNAc...) asparagine glycan. HEAT repeat units follow at residues 308–345, 347–385, 401–446, and 452–489; these read IYLE…RLPW, LAEQ…WHGA, SKCL…CYSK, and LQTN…RHAS. Residue Asn373 is glycosylated (N-linked (GlcNAc...) asparagine). Asn721, Asn883, and Asn1083 each carry an N-linked (GlcNAc...) asparagine glycan.

Interacts with alp21.

It localises to the cytoplasm. The protein localises to the cytoskeleton. Has a function in the folding of beta-tubulin. Microtubule-associated protein that is essential to direct polarized cell growth and to position the nucleus and septum to the center of the cell during mitosis. This chain is Tubulin-folding cofactor D (alp1), found in Schizosaccharomyces pombe (strain 972 / ATCC 24843) (Fission yeast).